The chain runs to 193 residues: Thioredoxin peroxidase (193 aa).

Residues 3-161 (AVVGKLAPSF…ALRLLDAFQF (159 aa)) enclose the Thioredoxin domain. Cys48 acts as the Cysteine sulfenic acid (-SOH) intermediate in catalysis.

The protein belongs to the peroxiredoxin family. AhpC/Prx1 subfamily. As to quaternary structure, homodimer; disulfide-linked, upon oxidation.

The catalysed reaction is a hydroperoxide + [thioredoxin]-dithiol = an alcohol + [thioredoxin]-disulfide + H2O. Thiol-specific peroxidase that catalyzes the reduction of hydrogen peroxide and organic hydroperoxides to water and alcohols, respectively. Plays a role in cell protection against oxidative stress by detoxifying peroxides and as sensor of hydrogen peroxide-mediated signaling events. The protein is Thioredoxin peroxidase (TPX) of Echinococcus granulosus (Hydatid tapeworm).